The primary structure comprises 301 residues: MHKGLKRLGVITSLGVLLVLIQGALVTNTGSGEGCGQTWPLCFGQVIPLDPPPETVIEFSHRLVAGIVGMLVILMAIWSWRRLKHMPETRFLAVISVFMIIFQGLLGAGAVVFGQSDLIMALHFGFSALSFASVVLLTRLAFEDSNPQKQYAPIVSKAYKGYVIFVAIYSYVAIYTGAYVKHTNATLACSGFPLCNGQWVPDVFTEAIGVQLLHRSAAILLSLLLLVLFIWTVKTFRASRVLVVCASLAMLLVIGQAASGVAVVLTYNATLTLGIFHALLISLLFTLLCYMVMLVTRHKAK.

Residues 1 to 7 are Cytoplasmic-facing; that stretch reads MHKGLKR. A helical membrane pass occupies residues 8–28; the sequence is LGVITSLGVLLVLIQGALVTN. Over 29 to 56 the chain is Extracellular; that stretch reads TGSGEGCGQTWPLCFGQVIPLDPPPETV. An intrachain disulfide couples cysteine 35 to cysteine 42. Residues 57–77 traverse the membrane as a helical segment; sequence IEFSHRLVAGIVGMLVILMAI. Residue glutamate 58 is part of the active site. Histidine 61 serves as a coordination point for heme o. At 78–92 the chain is on the cytoplasmic side; that stretch reads WSWRRLKHMPETRFL. Residues 93–113 form a helical membrane-spanning segment; it reads AVISVFMIIFQGLLGAGAVVF. Over 114–117 the chain is Extracellular; the sequence is GQSD. A helical transmembrane segment spans residues 118–138; sequence LIMALHFGFSALSFASVVLLT. Histidine 123 contacts heme o. At 139 to 159 the chain is on the cytoplasmic side; the sequence is RLAFEDSNPQKQYAPIVSKAY. Residues 160-180 form a helical membrane-spanning segment; the sequence is KGYVIFVAIYSYVAIYTGAYV. The Extracellular portion of the chain corresponds to 181–215; the sequence is KHTNATLACSGFPLCNGQWVPDVFTEAIGVQLLHR. Cysteine 189 and cysteine 195 are joined by a disulfide. A heme b-binding site is contributed by histidine 214. A helical transmembrane segment spans residues 216–236; that stretch reads SAAILLSLLLLVLFIWTVKTF. At 237 to 240 the chain is on the cytoplasmic side; it reads RASR. Residues 241–261 form a helical membrane-spanning segment; sequence VLVVCASLAMLLVIGQAASGV. The Extracellular portion of the chain corresponds to 262–274; sequence AVVLTYNATLTLG. The chain crosses the membrane as a helical span at residues 275–295; that stretch reads IFHALLISLLFTLLCYMVMLV. A heme b-binding site is contributed by histidine 277. Residues 296–301 lie on the Cytoplasmic side of the membrane; the sequence is TRHKAK.

It belongs to the COX15/CtaA family. Type 1 subfamily. Interacts with CtaB. Heme b is required as a cofactor.

It is found in the cell membrane. It catalyses the reaction Fe(II)-heme o + 2 A + H2O = Fe(II)-heme a + 2 AH2. It functions in the pathway porphyrin-containing compound metabolism; heme A biosynthesis; heme A from heme O: step 1/1. Functionally, catalyzes the conversion of heme O to heme A by two successive hydroxylations of the methyl group at C8. The first hydroxylation forms heme I, the second hydroxylation results in an unstable dihydroxymethyl group, which spontaneously dehydrates, resulting in the formyl group of heme A. The protein is Heme A synthase of Shouchella clausii (strain KSM-K16) (Alkalihalobacillus clausii).